We begin with the raw amino-acid sequence, 4008 residues long: Extracellular matrix organizing protein FRAS1 (4008 aa).

Residues Met1–Gly26 form the signal peptide. VWFC domains follow at residues Ala27 to Val88, Gly93 to Val153, Lys157 to Ser217, Arg219 to Val279, and Gly283 to Ile343. The Extracellular segment spans residues Ala27 to Ser3901. Ser344 carries the phosphoserine modification. Positions Gly347–Thr417 constitute a VWFC 6 domain. Asn361 carries N-linked (GlcNAc...) asparagine glycosylation. 14 FU repeats span residues Lys409 to Gln460, Gly462 to Gln505, Arg507 to Asn553, Gln555 to Ala599, Thr602 to Ser647, His649 to Leu705, Thr708 to His753, Glu755 to Leu800, Val803 to Ala852, Arg854 to Leu900, Asn903 to Leu948, Thr952 to Gln997, Ser999 to Ala1042, and Lys1046 to Val1089. A glycan (N-linked (GlcNAc...) asparagine) is linked at Asn728. Residues Asn1093 and Asn1108 are each glycosylated (N-linked (GlcNAc...) asparagine). CSPG repeat units follow at residues Thr1102–Ser1197, Ala1217–Asn1308, Gly1329–Ser1438, Ala1463–Ala1559, Pro1595–Thr1689, Gly1710–Ser1810, and Pro1833–Ser1936. Residue Asn1504 is glycosylated (N-linked (GlcNAc...) asparagine). An N-linked (GlcNAc...) asparagine glycan is attached at Asn1777. 2 N-linked (GlcNAc...) asparagine glycosylation sites follow: Asn1948 and Asn1978. CSPG repeat units follow at residues Glu1957–Thr2057, Thr2078–Val2177, Pro2199–Ser2291, Ser2311–Ser2404, and Thr2439–Lys2536. Calx-beta domains are found at residues Val2543–Ser2646, Ala2659–Ala2770, Ala2784–Ser2890, Ile2905–Gly3007, and Ala3025–Gly3129. N-linked (GlcNAc...) asparagine glycosylation is found at Asn2563, Asn2664, and Asn2682. Residues Asn2908, Asn2985, Asn3070, Asn3218, Asn3676, and Asn3875 are each glycosylated (N-linked (GlcNAc...) asparagine). The chain crosses the membrane as a helical span at residues Ile3902 to Ile3922. Over Asn3923–Val4008 the chain is Cytoplasmic.

Belongs to the FRAS1 family. In terms of tissue distribution, expressed in many adult tissues, with highest levels in kidney, pancreas and thalamus. Relatively high expression was also detected in fetal kidney and heart.

The protein localises to the cell membrane. Involved in extracellular matrix organization. Required for the regulation of epidermal-basement membrane adhesion responsible for proper organogenesis during embryonic development. Involved in brain organization and function. This is Extracellular matrix organizing protein FRAS1 from Homo sapiens (Human).